Here is a 357-residue protein sequence, read N- to C-terminus: Cinnamyl alcohol dehydrogenase 1 (357 aa).

Residue Cys-47 coordinates Zn(2+). Position 49 (Thr-49) interacts with NADP(+). The Zn(2+) site is built by His-69, Glu-70, Cys-100, Cys-103, Cys-106, Cys-114, and Cys-163. NADP(+) is bound by residues Thr-167, 188 to 193 (GLGGVG), 211 to 216 (SSSDKK), Thr-251, Gly-275, and 298 to 300 (SFI).

Belongs to the zinc-containing alcohol dehydrogenase family. In terms of assembly, homodimer. Zn(2+) is required as a cofactor. As to expression, expressed in leaves, mainly in peltate glands.

The catalysed reaction is (E)-cinnamyl alcohol + NADP(+) = (E)-cinnamaldehyde + NADPH + H(+). It catalyses the reaction (E)-coniferol + NADP(+) = (E)-coniferaldehyde + NADPH + H(+). It carries out the reaction (E)-sinapyl alcohol + NADP(+) = (E)-sinapaldehyde + NADPH + H(+). The enzyme catalyses (E)-4-coumaroyl alcohol + NADP(+) = (E)-4-coumaraldehyde + NADPH + H(+). The catalysed reaction is (E)-caffeyl alcohol + NADP(+) = (E)-caffeyl aldehyde + NADPH + H(+). The protein operates within aromatic compound metabolism; phenylpropanoid biosynthesis. With respect to regulation, 60% inhibition by 5 mM Ca(+), Mg(+) or Cu(+). Involved in the production of citral, a mixture of geranial and neral with a strong lemony scent. Reversibly oxidizes geraniol to produce geranial at half the efficiency compared with its activity with cinnamyl alcohol. Does not use nerol and neral as substrates. The chain is Cinnamyl alcohol dehydrogenase 1 (CAD1) from Ocimum basilicum (Sweet basil).